The following is a 300-amino-acid chain: tRNA dimethylallyltransferase (300 aa).

Residue 9 to 16 (GPTASGKS) coordinates ATP. 11–16 (TASGKS) provides a ligand contact to substrate. The tract at residues 34–37 (DSKQ) is interaction with substrate tRNA.

The protein belongs to the IPP transferase family. As to quaternary structure, monomer. Mg(2+) is required as a cofactor.

It carries out the reaction adenosine(37) in tRNA + dimethylallyl diphosphate = N(6)-dimethylallyladenosine(37) in tRNA + diphosphate. Its function is as follows. Catalyzes the transfer of a dimethylallyl group onto the adenine at position 37 in tRNAs that read codons beginning with uridine, leading to the formation of N6-(dimethylallyl)adenosine (i(6)A). The protein is tRNA dimethylallyltransferase of Ehrlichia ruminantium (strain Welgevonden).